A 162-amino-acid chain; its full sequence is uncharacterized protein (162 aa).

An N-terminal signal peptide occupies residues 1 to 24 (MKRGVATLPVILVILLSVAAGAGA).

This is an uncharacterized protein from Mycobacterium bovis (strain ATCC BAA-935 / AF2122/97).